A 669-amino-acid polypeptide reads, in one-letter code: DNA ligase (669 aa).

NAD(+) contacts are provided by residues 34 to 38 (DAEYD), 83 to 84 (SL), and Glu-113. The active-site N6-AMP-lysine intermediate is Lys-115. Residues Arg-136, Glu-170, Lys-286, and Lys-310 each coordinate NAD(+). Zn(2+) contacts are provided by Cys-404, Cys-407, Cys-422, and Cys-427. Residues 591-669 (IADSPFAGKT…EEALVKAISH (79 aa)) form the BRCT domain.

The protein belongs to the NAD-dependent DNA ligase family. LigA subfamily. Mg(2+) serves as cofactor. Requires Mn(2+) as cofactor.

The catalysed reaction is NAD(+) + (deoxyribonucleotide)n-3'-hydroxyl + 5'-phospho-(deoxyribonucleotide)m = (deoxyribonucleotide)n+m + AMP + beta-nicotinamide D-nucleotide.. In terms of biological role, DNA ligase that catalyzes the formation of phosphodiester linkages between 5'-phosphoryl and 3'-hydroxyl groups in double-stranded DNA using NAD as a coenzyme and as the energy source for the reaction. It is essential for DNA replication and repair of damaged DNA. In Halalkalibacterium halodurans (strain ATCC BAA-125 / DSM 18197 / FERM 7344 / JCM 9153 / C-125) (Bacillus halodurans), this protein is DNA ligase.